A 393-amino-acid polypeptide reads, in one-letter code: Methylthioribose kinase (393 aa).

Residues asparagine 38, lysine 53, and 107–109 contribute to the ATP site; that span reads EDL. Position 225 (aspartate 225) interacts with substrate. 242-244 provides a ligand contact to ATP; sequence DPE. Arginine 332 provides a ligand contact to substrate.

The protein belongs to the methylthioribose kinase family. As to quaternary structure, homodimer.

It carries out the reaction 5-(methylsulfanyl)-D-ribose + ATP = 5-(methylsulfanyl)-alpha-D-ribose 1-phosphate + ADP + H(+). The protein operates within amino-acid biosynthesis; L-methionine biosynthesis via salvage pathway; S-methyl-5-thio-alpha-D-ribose 1-phosphate from S-methyl-5'-thioadenosine (hydrolase route): step 2/2. Catalyzes the phosphorylation of methylthioribose into methylthioribose-1-phosphate. The sequence is that of Methylthioribose kinase from Bacillus cereus (strain G9842).